Here is a 909-residue protein sequence, read N- to C-terminus: E3 ubiquitin-protein ligase HACE1 (909 aa).

Positions 1-21 are N-terminal helix important for homodimerization; sequence MERAMEQLNRLTRSLRRARTV. ANK repeat units follow at residues 23–55, 64–93, 97–126, 130–159, 163–192, 196–226, and 228–253; these read LPDD…NSKF, VKRS…NPNY, SGCT…DVNI, EGLT…DVDV, MGQT…DINR, SGAT…YLSD, and NGVT…QYHP. The tract at residues 396 to 433 is disordered; sequence KGQDQDGTSIPPFEPPGPGSYENLSTGTGESKPDVLGG. The HECT domain occupies 574–909; sequence NCAKLKQGIA…HCGSYGYTMA (336 aa). The active-site Glycyl thioester intermediate is Cys-876.

Homodimer. The homodimer is autoinhibited and stabilized by its N-terminal helix. Interacts with RAB1 (RAB1A, RAB1B or RAB1C), RAB4 (RAB4A or RAB4B) and RAB11 (RAB11A or RAB11B); in a GTP-dependent manner. Interacts with the 26S proteasomal complex through the 20S core proteasomal subunit. Interacts with RARB. Autoubiquitinated.

It localises to the golgi apparatus. The protein resides in the golgi stack membrane. The protein localises to the cytoplasm. Its subcellular location is the endoplasmic reticulum. The catalysed reaction is S-ubiquitinyl-[E2 ubiquitin-conjugating enzyme]-L-cysteine + [acceptor protein]-L-lysine = [E2 ubiquitin-conjugating enzyme]-L-cysteine + N(6)-ubiquitinyl-[acceptor protein]-L-lysine.. Its pathway is protein modification; protein ubiquitination. E3 ubiquitin-protein ligase involved in Golgi membrane fusion and regulation of small GTPases. Acts as a regulator of Golgi membrane dynamics during the cell cycle: recruited to Golgi membrane by Rab proteins and regulates postmitotic Golgi membrane fusion. Acts by mediating ubiquitination during mitotic Golgi disassembly, ubiquitination serving as a signal for Golgi reassembly later, after cell division. Specifically binds GTP-bound RAC1, mediating ubiquitination and subsequent degradation of active RAC1, thereby playing a role in host defense against pathogens. May also act as a transcription regulator via its interaction with RARB. This is E3 ubiquitin-protein ligase HACE1 (HACE1) from Bos taurus (Bovine).